Here is a 422-residue protein sequence, read N- to C-terminus: Succinate--CoA ligase [ADP-forming] subunit beta, mitochondrial (422 aa).

The transit peptide at 1–27 (MVRGSLGKLASRALSVAGKWQHQQLRR) directs the protein to the mitochondrion. In terms of domain architecture, ATP-grasp spans 36–279 (AELMGKYGIN…TTQEDPREVA (244 aa)). ATP-binding positions include Lys75, 82 to 84 (GRG), and Glu142. 2 residues coordinate Mg(2+): Asn234 and Asp248. Substrate is bound by residues Asn299 and 356-358 (GIM).

It belongs to the succinate/malate CoA ligase beta subunit family. Heterodimer of an alpha and a beta subunit. Mg(2+) serves as cofactor.

It localises to the mitochondrion. The catalysed reaction is succinate + ATP + CoA = succinyl-CoA + ADP + phosphate. The protein operates within carbohydrate metabolism; tricarboxylic acid cycle; succinate from succinyl-CoA (ligase route): step 1/1. In terms of biological role, succinyl-CoA synthetase functions in the citric acid cycle (TCA), coupling the hydrolysis of succinyl-CoA to the synthesis of ATP and thus represents the only step of substrate-level phosphorylation in the TCA. The beta subunit provides nucleotide specificity of the enzyme and binds the substrate succinate, while the binding sites for coenzyme A and phosphate are found in the alpha subunit. In Oryza sativa subsp. japonica (Rice), this protein is Succinate--CoA ligase [ADP-forming] subunit beta, mitochondrial.